The sequence spans 374 residues: Chaperone protein DnaJ (374 aa).

Positions 4 to 69 (SYYEILEITQ…EKRAIYDRYG (66 aa)) constitute a J domain. A CR-type zinc finger spans residues 136 to 213 (GCKKNIDFTY…CKGLGYNESK (78 aa)). Zn(2+) contacts are provided by C149, C152, C165, C168, C187, C190, C201, and C204. 4 CXXCXGXG motif repeats span residues 149 to 156 (CKTCNGTG), 165 to 172 (CPKCQGRG), 187 to 194 (CPDCQGSG), and 201 to 208 (CSDCKGLG).

It belongs to the DnaJ family. As to quaternary structure, homodimer. Zn(2+) serves as cofactor.

Its subcellular location is the cytoplasm. In terms of biological role, participates actively in the response to hyperosmotic and heat shock by preventing the aggregation of stress-denatured proteins and by disaggregating proteins, also in an autonomous, DnaK-independent fashion. Unfolded proteins bind initially to DnaJ; upon interaction with the DnaJ-bound protein, DnaK hydrolyzes its bound ATP, resulting in the formation of a stable complex. GrpE releases ADP from DnaK; ATP binding to DnaK triggers the release of the substrate protein, thus completing the reaction cycle. Several rounds of ATP-dependent interactions between DnaJ, DnaK and GrpE are required for fully efficient folding. Also involved, together with DnaK and GrpE, in the DNA replication of plasmids through activation of initiation proteins. The polypeptide is Chaperone protein DnaJ (Campylobacter jejuni subsp. jejuni serotype O:6 (strain 81116 / NCTC 11828)).